A 385-amino-acid chain; its full sequence is 8-amino-7-oxononanoate synthase (385 aa).

R21 provides a ligand contact to substrate. Residue 108 to 109 (GF) participates in pyridoxal 5'-phosphate binding. Substrate is bound at residue H133. Positions 179, 207, and 233 each coordinate pyridoxal 5'-phosphate. Residue K236 is modified to N6-(pyridoxal phosphate)lysine. T352 serves as a coordination point for substrate.

The protein belongs to the class-II pyridoxal-phosphate-dependent aminotransferase family. BioF subfamily. Homodimer. The cofactor is pyridoxal 5'-phosphate.

It catalyses the reaction 6-carboxyhexanoyl-[ACP] + L-alanine + H(+) = (8S)-8-amino-7-oxononanoate + holo-[ACP] + CO2. The protein operates within cofactor biosynthesis; biotin biosynthesis. Its function is as follows. Catalyzes the decarboxylative condensation of pimeloyl-[acyl-carrier protein] and L-alanine to produce 8-amino-7-oxononanoate (AON), [acyl-carrier protein], and carbon dioxide. The protein is 8-amino-7-oxononanoate synthase of Klebsiella pneumoniae subsp. pneumoniae (strain ATCC 700721 / MGH 78578).